The chain runs to 461 residues: ATP synthase subunit beta (461 aa).

ATP is bound at residue 151–158; sequence GGAGVGKT.

The protein belongs to the ATPase alpha/beta chains family. In terms of assembly, F-type ATPases have 2 components, CF(1) - the catalytic core - and CF(0) - the membrane proton channel. CF(1) has five subunits: alpha(3), beta(3), gamma(1), delta(1), epsilon(1). CF(0) has three main subunits: a(1), b(2) and c(9-12). The alpha and beta chains form an alternating ring which encloses part of the gamma chain. CF(1) is attached to CF(0) by a central stalk formed by the gamma and epsilon chains, while a peripheral stalk is formed by the delta and b chains.

Its subcellular location is the cell inner membrane. It catalyses the reaction ATP + H2O + 4 H(+)(in) = ADP + phosphate + 5 H(+)(out). Produces ATP from ADP in the presence of a proton gradient across the membrane. The catalytic sites are hosted primarily by the beta subunits. The polypeptide is ATP synthase subunit beta (Colwellia psychrerythraea (strain 34H / ATCC BAA-681) (Vibrio psychroerythus)).